The following is a 625-amino-acid chain: Prothrombin (625 aa).

A signal peptide spans 1-24 (MARVRGPRLPGCLALAALFSLVHS). Positions 25–43 (QHVFLAHQQASSLLQRARR) are excised as a propeptide. The 47-residue stretch at 44 to 90 (ANKGFLEEVRKGNLERECLEEPCSREEAFEALESLSATDAFWAKYTA) folds into the Gla domain. 10 positions are modified to 4-carboxyglutamate: glutamate 50, glutamate 51, glutamate 58, glutamate 60, glutamate 63, glutamate 64, glutamate 69, glutamate 70, glutamate 73, and glutamate 76. Cysteine 61 and cysteine 66 form a disulfide bridge. 11 disulfides stabilise this stretch: cysteine 91–cysteine 104, cysteine 109–cysteine 187, cysteine 130–cysteine 170, cysteine 158–cysteine 182, cysteine 214–cysteine 292, cysteine 235–cysteine 275, cysteine 263–cysteine 287, cysteine 339–cysteine 485, cysteine 394–cysteine 410, cysteine 539–cysteine 553, and cysteine 567–cysteine 597. Kringle domains follow at residues 109 to 187 (CAEG…VPVC) and 214 to 292 (CVPD…LNYC). N-linked (GlcNAc...) asparagine glycans are attached at residues asparagine 120 and asparagine 144. Positions 367–621 (IVEGQDAEVG…LKKWIQKVID (255 aa)) constitute a Peptidase S1 domain. Histidine 409 functions as the Charge relay system in the catalytic mechanism. Asparagine 419 carries an N-linked (GlcNAc...) asparagine glycan. Aspartate 465 serves as the catalytic Charge relay system. The high affinity receptor-binding region which is also known as the TP508 peptide stretch occupies residues 554–576 (AGYKPGEGKRGDACEGDSGGPFV). Serine 571 acts as the Charge relay system in catalysis.

It belongs to the peptidase S1 family. In terms of assembly, heterodimer (named alpha-thrombin) of a light and a heavy chain; disulfide-linked. Forms a heterodimer with SERPINA5. In plasma, interacts (via N-terminus) with alpha-1-microglobulin; this interaction does not prevent the activation of prothrombin to thrombin. The gamma-carboxyglutamyl residues, which bind calcium ions, result from the carboxylation of glutamyl residues by a microsomal enzyme, the vitamin K-dependent carboxylase. The modified residues are necessary for the calcium-dependent interaction with a negatively charged phospholipid surface, which is essential for the conversion of prothrombin to thrombin. Post-translationally, in the penultimate step of the coagulation cascade, prothrombin is converted to thrombin by the prothrombinase complex composed of factor Xa (F10), cofactor Va (F5), and phospholipids. This activation requires factor Xa-catalyzed sequential cleavage at 2 sites, Arg-317 and Arg-366, along 2 possible pathways. In the first pathway, the first cleavage occurs at Arg-317, leading to the formation of the inactive intermediate prethrombin-2. This pathway preferentially occurs on platelets and in the absence of cofactor Va. In the second pathway, the first cleavage occurs at Arg-366, which separates protease domain into 2 chains that remain connected through a disulfide bond and generates the active intermediate meizothrombin. The presence of cofactor Va directs activation along the meizothrombin pathway and greatly accelerates the rate of cleavage at Arg-366, but has a smaller effect on the cleavage of meizothrombin at Arg-317. Meizothrombin accumulates as an intermediate when prothrombinase is assembled on the membrane of red blood cells. In terms of tissue distribution, expressed by the liver and secreted in plasma.

The protein resides in the secreted. The protein localises to the extracellular space. The enzyme catalyses Selective cleavage of Arg-|-Gly bonds in fibrinogen to form fibrin and release fibrinopeptides A and B.. Activity is promoted in the presence of negatively charged surfaces, such as polyphosphate and dextran sulfate. Inhibited by SERPINA5. In terms of biological role, thrombin, which cleaves bonds after Arg and Lys, converts fibrinogen to fibrin and activates factors V, VII, VIII, XIII, and, in complex with thrombomodulin, protein C. Functions in blood homeostasis, inflammation and wound healing. Activates coagulation factor XI (F11); activation is promoted by the contact with negatively charged surfaces. Triggers the production of pro-inflammatory cytokines, such as MCP-1/CCL2 and IL8/CXCL8, in endothelial cells. The protein is Prothrombin (F2) of Bos taurus (Bovine).